Consider the following 392-residue polypeptide: DNA replication and repair protein RecF (392 aa).

33 to 40 serves as a coordination point for ATP; the sequence is GANGAGKT.

Belongs to the RecF family.

The protein localises to the cytoplasm. In terms of biological role, the RecF protein is involved in DNA metabolism; it is required for DNA replication and normal SOS inducibility. RecF binds preferentially to single-stranded, linear DNA. It also seems to bind ATP. In Caulobacter sp. (strain K31), this protein is DNA replication and repair protein RecF.